The following is a 478-amino-acid chain: Protein nucleotidyltransferase YdiU (478 aa).

Positions 83, 85, 86, 106, 118, 119, 169, and 176 each coordinate ATP. Residue Asp-245 is the Proton acceptor of the active site. Mg(2+)-binding residues include Asn-246 and Asp-255. Asp-255 contacts ATP.

The protein belongs to the SELO family. Requires Mg(2+) as cofactor. It depends on Mn(2+) as a cofactor.

The enzyme catalyses L-seryl-[protein] + ATP = 3-O-(5'-adenylyl)-L-seryl-[protein] + diphosphate. It catalyses the reaction L-threonyl-[protein] + ATP = 3-O-(5'-adenylyl)-L-threonyl-[protein] + diphosphate. The catalysed reaction is L-tyrosyl-[protein] + ATP = O-(5'-adenylyl)-L-tyrosyl-[protein] + diphosphate. It carries out the reaction L-histidyl-[protein] + UTP = N(tele)-(5'-uridylyl)-L-histidyl-[protein] + diphosphate. The enzyme catalyses L-seryl-[protein] + UTP = O-(5'-uridylyl)-L-seryl-[protein] + diphosphate. It catalyses the reaction L-tyrosyl-[protein] + UTP = O-(5'-uridylyl)-L-tyrosyl-[protein] + diphosphate. Nucleotidyltransferase involved in the post-translational modification of proteins. It can catalyze the addition of adenosine monophosphate (AMP) or uridine monophosphate (UMP) to a protein, resulting in modifications known as AMPylation and UMPylation. This Exiguobacterium sp. (strain ATCC BAA-1283 / AT1b) protein is Protein nucleotidyltransferase YdiU.